A 52-amino-acid polypeptide reads, in one-letter code: uncharacterized protein (52 aa).

Residues 3 to 46 adopt a coiled-coil conformation; it reads KIQLESSNQSVLKLEERRLNLTAEIERIYGQMDLKRKELENANL.

This is an uncharacterized protein from Dictyostelium discoideum (Social amoeba).